The sequence spans 571 residues: Proline--tRNA ligase (571 aa).

Belongs to the class-II aminoacyl-tRNA synthetase family. ProS type 1 subfamily. In terms of assembly, homodimer.

It is found in the cytoplasm. The catalysed reaction is tRNA(Pro) + L-proline + ATP = L-prolyl-tRNA(Pro) + AMP + diphosphate. Functionally, catalyzes the attachment of proline to tRNA(Pro) in a two-step reaction: proline is first activated by ATP to form Pro-AMP and then transferred to the acceptor end of tRNA(Pro). As ProRS can inadvertently accommodate and process non-cognate amino acids such as alanine and cysteine, to avoid such errors it has two additional distinct editing activities against alanine. One activity is designated as 'pretransfer' editing and involves the tRNA(Pro)-independent hydrolysis of activated Ala-AMP. The other activity is designated 'posttransfer' editing and involves deacylation of mischarged Ala-tRNA(Pro). The misacylated Cys-tRNA(Pro) is not edited by ProRS. This is Proline--tRNA ligase from Pasteurella multocida (strain Pm70).